Consider the following 122-residue polypeptide: Large ribosomal subunit protein uL18 (122 aa).

Belongs to the universal ribosomal protein uL18 family. As to quaternary structure, part of the 50S ribosomal subunit; part of the 5S rRNA/L5/L18/L25 subcomplex. Contacts the 5S and 23S rRNAs.

In terms of biological role, this is one of the proteins that bind and probably mediate the attachment of the 5S RNA into the large ribosomal subunit, where it forms part of the central protuberance. The polypeptide is Large ribosomal subunit protein uL18 (Agathobacter rectalis (strain ATCC 33656 / DSM 3377 / JCM 17463 / KCTC 5835 / VPI 0990) (Eubacterium rectale)).